A 275-amino-acid chain; its full sequence is NH(3)-dependent NAD(+) synthetase (275 aa).

46-53 (GISGGQDS) is a binding site for ATP. Residue D52 participates in Mg(2+) binding. R140 provides a ligand contact to deamido-NAD(+). T160 lines the ATP pocket. E165 lines the Mg(2+) pocket. Positions 173 and 180 each coordinate deamido-NAD(+). 2 residues coordinate ATP: K189 and T211. 260 to 261 (HK) contacts deamido-NAD(+).

Belongs to the NAD synthetase family. In terms of assembly, homodimer.

It catalyses the reaction deamido-NAD(+) + NH4(+) + ATP = AMP + diphosphate + NAD(+) + H(+). It functions in the pathway cofactor biosynthesis; NAD(+) biosynthesis; NAD(+) from deamido-NAD(+) (ammonia route): step 1/1. Catalyzes the ATP-dependent amidation of deamido-NAD to form NAD. Uses ammonia as a nitrogen source. This Salmonella typhi protein is NH(3)-dependent NAD(+) synthetase.